Reading from the N-terminus, the 90-residue chain is Small ribosomal subunit protein uS15 (90 aa).

The protein belongs to the universal ribosomal protein uS15 family. In terms of assembly, part of the 30S ribosomal subunit. Forms a bridge to the 50S subunit in the 70S ribosome, contacting the 23S rRNA.

Its function is as follows. One of the primary rRNA binding proteins, it binds directly to 16S rRNA where it helps nucleate assembly of the platform of the 30S subunit by binding and bridging several RNA helices of the 16S rRNA. Forms an intersubunit bridge (bridge B4) with the 23S rRNA of the 50S subunit in the ribosome. This Helicobacter acinonychis (strain Sheeba) protein is Small ribosomal subunit protein uS15.